The following is a 213-amino-acid chain: Probable thiopurine S-methyltransferase (213 aa).

4 residues coordinate S-adenosyl-L-methionine: tryptophan 10, leucine 45, glutamate 66, and arginine 125.

This sequence belongs to the class I-like SAM-binding methyltransferase superfamily. TPMT family.

The protein localises to the cytoplasm. The catalysed reaction is S-adenosyl-L-methionine + a thiopurine = S-adenosyl-L-homocysteine + a thiopurine S-methylether.. This is Probable thiopurine S-methyltransferase from Yarrowia lipolytica (strain CLIB 122 / E 150) (Yeast).